Here is a 224-residue protein sequence, read N- to C-terminus: N6-methyladenosine RNA demethylase ALKBH (224 aa).

One can recognise a Fe2OG dioxygenase domain in the interval 93-222; that stretch reads LAQAAIVNFY…RINLNVRQMR (130 aa). Positions 111, 113, and 178 each coordinate Fe cation. Arginine 213 contacts 2-oxoglutarate.

It belongs to the alkB family. Requires Fe(2+) as cofactor.

It carries out the reaction an N(6)-methyladenosine in mRNA + 2-oxoglutarate + O2 = an adenosine in mRNA + formaldehyde + succinate + CO2. In terms of biological role, RNA demethylase that regulates the stability of mRNAs through an m(6)A-dependent manner. M6A is a modification present at internal sites of mRNAs and some non-coding RNAs and plays a role in mRNA stability and processing. Demethylate m6A at position A1935 within the 3'UTR of transcription factor ZAP1 and plays an important role in C.parasitica development and virulence. Target mRNAs are primarily associated with amino-acid biosynthesis, 2-oxocarboxylic acid metabolism, and ABC transporters, as well as alpha-amino acid metabolism, small-molecule biosynthesis, and the sulfite reductase complex (NADPH). The protein is N6-methyladenosine RNA demethylase ALKBH of Cryphonectria parasitica (strain ATCC 38755 / EP155).